The sequence spans 181 residues: ATP-dependent protease subunit HslV (181 aa).

Residue threonine 8 is part of the active site. The Na(+) site is built by glycine 165, cysteine 168, and threonine 171.

The protein belongs to the peptidase T1B family. HslV subfamily. As to quaternary structure, a double ring-shaped homohexamer of HslV is capped on each side by a ring-shaped HslU homohexamer. The assembly of the HslU/HslV complex is dependent on binding of ATP.

It localises to the cytoplasm. It carries out the reaction ATP-dependent cleavage of peptide bonds with broad specificity.. Its activity is regulated as follows. Allosterically activated by HslU binding. Its function is as follows. Protease subunit of a proteasome-like degradation complex believed to be a general protein degrading machinery. This chain is ATP-dependent protease subunit HslV, found in Oceanobacillus iheyensis (strain DSM 14371 / CIP 107618 / JCM 11309 / KCTC 3954 / HTE831).